Consider the following 128-residue polypeptide: Probable 4-amino-4-deoxy-L-arabinose-phosphoundecaprenol flippase subunit ArnF (128 aa).

Residues Met-1–Gly-2 lie on the Cytoplasmic side of the membrane. Residues Leu-3–Ala-23 traverse the membrane as a helical segment. Residues Ala-24 to His-32 are Periplasmic-facing. A helical membrane pass occupies residues Leu-33–Gly-53. Topologically, residues Leu-54 to Ala-76 are cytoplasmic. Residues Tyr-77–Trp-97 traverse the membrane as a helical segment. The Periplasmic segment spans residues Glu-98 to Thr-100. A helical membrane pass occupies residues Phe-101–Leu-121. Residues Pro-122–Tyr-128 lie on the Cytoplasmic side of the membrane.

The protein belongs to the ArnF family. Heterodimer of ArnE and ArnF.

The protein resides in the cell inner membrane. Its pathway is bacterial outer membrane biogenesis; lipopolysaccharide biosynthesis. Functionally, translocates 4-amino-4-deoxy-L-arabinose-phosphoundecaprenol (alpha-L-Ara4N-phosphoundecaprenol) from the cytoplasmic to the periplasmic side of the inner membrane. This chain is Probable 4-amino-4-deoxy-L-arabinose-phosphoundecaprenol flippase subunit ArnF, found in Escherichia coli O7:K1 (strain IAI39 / ExPEC).